We begin with the raw amino-acid sequence, 492 residues long: Solute carrier family 2, facilitated glucose transporter member 1 (492 aa).

Residue M1 is modified to N-acetylmethionine. The Cytoplasmic portion of the chain corresponds to 1–11 (MEPTSKKLTGR). A helical membrane pass occupies residues 12–33 (LMLAVGGAVLGSLQFGYNTGVI). Residues 34-66 (NAPQKVIEEFYNQTWVQRYGEPIPPATLTTLWS) lie on the Extracellular side of the membrane. The N-linked (GlcNAc...) asparagine glycan is linked to N45. The chain crosses the membrane as a helical span at residues 67–87 (LSVAIFSVGGMIGSFSVGLFV). Topologically, residues 88 to 90 (NRF) are cytoplasmic. The chain crosses the membrane as a helical span at residues 91-112 (GRRNSMLMMNLLAFVSAVLMGF). Topologically, residues 113 to 120 (SKLGKSFE) are extracellular. Residues 121–144 (MLILGRFIIGVYCGLTTGFVPMYV) traverse the membrane as a helical segment. Residues 145–155 (GEVSPTELRGA) lie on the Cytoplasmic side of the membrane. A helical membrane pass occupies residues 156–176 (LGTLHQLGIVVGILIAQVFGL). Q161 is a D-glucose binding site. Topologically, residues 177-185 (DSIMGNQEL) are extracellular. The helical transmembrane segment at 186–206 (WPLLLSVIFIPALLQCILLPF) threads the bilayer. The Cytoplasmic portion of the chain corresponds to 207–271 (CPESPRFLLI…LFRSAAYRQP (65 aa)). S226 carries the post-translational modification Phosphoserine. A helical membrane pass occupies residues 272–293 (ILIAVVLQLSQQLSGINAVFYY). D-glucose contacts are provided by residues 282 to 283 (QQ) and N288. Topologically, residues 294-306 (STSIFEKAGVQQP) are extracellular. A helical membrane pass occupies residues 307–328 (VYATIGSGIVNTAFTVVSLFVV). N317 is a D-glucose binding site. At 329-334 (ERAGRR) the chain is on the cytoplasmic side. A helical membrane pass occupies residues 335–355 (TLHLIGLAGMAGCAVLMTIAL). The Extracellular portion of the chain corresponds to 356–365 (ALLERLPWMS). Residues 366-388 (YLSIVAIFGFVAFFEVGPGPIPW) form a helical membrane-spanning segment. D-glucose-binding residues include E380 and W388. At 389 to 401 (FIVAELFSQGPRP) the chain is on the cytoplasmic side. A helical transmembrane segment spans residues 402-422 (AAIAVAGFSNWTSNFIVGMCF). Residues 423 to 429 (QYVEQLC) lie on the Extracellular side of the membrane. Residues 430–450 (GPYVFIIFTVLLVLFFIFTYF) form a helical membrane-spanning segment. Topologically, residues 451–492 (KVPETKGRTFDEIASGFRQGGASQSDKTPEELFHPLGADSQV) are cytoplasmic. S465 is subject to Phosphoserine. Residues 468–492 (RQGGASQSDKTPEELFHPLGADSQV) form a disordered region. T478 is modified (phosphothreonine). S490 is subject to Phosphoserine.

This sequence belongs to the major facilitator superfamily. Sugar transporter (TC 2.A.1.1) family. Glucose transporter subfamily. In terms of assembly, found in a complex with ADD2, DMTN and SLC2A1. Interacts (via C-terminus cytoplasmic region) with DMTN. Interacts with SNX27; the interaction is required when endocytosed to prevent degradation in lysosomes and promote recycling to the plasma membrane. Interacts with GIPC (via PDZ domain). Interacts with STOM. Interacts with SGTA (via Gln-rich region). Interacts with BSG. Interacts with SMIM43; the interaction may promote SLC2A1-mediated glucose transport to meet the energy needs of mesendoderm differentiation. Post-translationally, phosphorylation at Ser-226 by PKC promotes glucose uptake by increasing cell membrane localization. In terms of tissue distribution, detected in brain capillary (at protein level). Detected in brain capillary.

The protein localises to the cell membrane. The protein resides in the photoreceptor inner segment. The enzyme catalyses D-glucose(out) = D-glucose(in). Its activity is regulated as follows. The uptake of glucose is inhibited by cytochalasin B. Glucose uptake is increased in response to phorbol ester 12-O-tetradecanoylphorbol-13-acetate (TPA) treatment: TPA-induced glucose uptake requires phosphorylation at Ser-226. Its function is as follows. Facilitative glucose transporter, which is responsible for constitutive or basal glucose uptake. Has a very broad substrate specificity; can transport a wide range of aldoses including both pentoses and hexoses. Most important energy carrier of the brain: present at the blood-brain barrier and assures the energy-independent, facilitative transport of glucose into the brain. In association with BSG and NXNL1, promotes retinal cone survival by increasing glucose uptake into photoreceptors. Required for mesendoderm differentiation. The sequence is that of Solute carrier family 2, facilitated glucose transporter member 1 from Bos taurus (Bovine).